Reading from the N-terminus, the 800-residue chain is Phenylalanine--tRNA ligase beta subunit (800 aa).

Residues 39–154 (TKDIKNLVVG…ESQVPGTDAL (116 aa)) enclose the tRNA-binding domain. One can recognise a B5 domain in the interval 408–483 (AFITPIDITA…RIYGYDDIPS (76 aa)). Mg(2+) contacts are provided by Asp461, Asp467, Glu470, and Glu471. In terms of domain architecture, FDX-ACB spans 708 to 800 (PRFPGMSRDI…ALIEQGAVIR (93 aa)).

It belongs to the phenylalanyl-tRNA synthetase beta subunit family. Type 1 subfamily. Tetramer of two alpha and two beta subunits. The cofactor is Mg(2+).

The protein localises to the cytoplasm. The catalysed reaction is tRNA(Phe) + L-phenylalanine + ATP = L-phenylalanyl-tRNA(Phe) + AMP + diphosphate + H(+). The sequence is that of Phenylalanine--tRNA ligase beta subunit from Staphylococcus aureus (strain MRSA252).